We begin with the raw amino-acid sequence, 803 residues long: Volume-regulated anion channel subunit LRRC8C (803 aa).

The Cytoplasmic segment spans residues 1 to 22 (MIPVTEFRQFSEQQPAFRVLKP). A helical transmembrane segment spans residues 23 to 48 (WWDVFTDYLSVAMLMIGVFGCTLQVM). Over 49-124 (QDKIICLPKR…CYERALHWYA (76 aa)) the chain is Extracellular. 2 cysteine pairs are disulfide-bonded: cysteine 54–cysteine 308 and cysteine 115–cysteine 293. A helical membrane pass occupies residues 125-144 (KYFPYLVLIHTLVFMLCSNF). Residues 145-262 (WFKFPGSSSK…EEGDILYAMY (118 aa)) lie on the Cytoplasmic side of the membrane. The disordered stretch occupies residues 177–206 (EVSGEDSEEKDNRKNNMNRSGTIQSGPEGN). A compositionally biased stretch (polar residues) spans 191-206 (NNMNRSGTIQSGPEGN). Phosphoserine occurs at positions 212 and 215. The helical transmembrane segment at 263-284 (VRQTVLKVIKFLIIIAYNSALV) threads the bilayer. At 285-314 (SKVQFTVDCNVDIQDMTGYKNFSCNHTMAH) the chain is on the extracellular side. The helical transmembrane segment at 315 to 339 (LFSKLSFCYLCFVSIYGLTCLYTLY) threads the bilayer. Over 340–803 (WLFYRSLREY…SDVREQMKAD (464 aa)) the chain is Cytoplasmic. LRR repeat units lie at residues 409-420 (WTPDKLRQKLQT), 421-443 (NAHN…VFEI), 446-466 (LQSL…IAQL), 467-488 (DNLQ…ALSF), 490-513 (KENL…MYGL), 515-537 (NLEE…TLES), 541-563 (LKSL…VVDV), 566-586 (HLQK…NNLK), 588-611 (MTNL…VFSL), 613-635 (SLQE…SFQH), 637-659 (RKLT…IKKL), 660-682 (TSLE…LFLC), 684-705 (KIRY…IGVL), 706-728 (QSLQ…LYFC), 730-751 (KLKT…IGNL), 752-774 (LFLS…LGDC), and 776-799 (ALKR…VREQ).

The protein belongs to the LRRC8 family. In terms of assembly, heterohexamer; oligomerizes with other LRRC8 proteins (LRRC8A, LRRC8B, LRRC8D and/or LRRC8E) to form a heterohexamer. Homoheptamer; inactive, likely because it is not targeted to the plasma membrane in the absence of LRRC8A. In vivo, the subunit composition may depend primarily on expression levels, and heterooligomeric channels containing various proportions of the different LRRC8 proteins may coexist. Expressed at very low levels in adipose tissue.

Its subcellular location is the cell membrane. It is found in the endoplasmic reticulum membrane. It carries out the reaction chloride(in) = chloride(out). The catalysed reaction is iodide(out) = iodide(in). The enzyme catalyses taurine(out) = taurine(in). It catalyses the reaction 2',3'-cGAMP(out) = 2',3'-cGAMP(in). In terms of biological role, non-essential component of the volume-regulated anion channel (VRAC, also named VSOAC channel), an anion channel required to maintain a constant cell volume in response to extracellular or intracellular osmotic changes. The VRAC channel conducts iodide better than chloride and can also conduct organic osmolytes like taurine. Plays a redundant role in the efflux of amino acids, such as aspartate and glutamate, in response to osmotic stress. The VRAC channel also mediates transport of immunoreactive cyclic dinucleotide GMP-AMP (2'-3'-cGAMP), an immune messenger produced in response to DNA virus in the cytosol. Channel activity requires LRRC8A plus at least one other family member (LRRC8B, LRRC8C, LRRC8D or LRRC8E); channel characteristics depend on the precise subunit composition. May play a role in adipogenesis. In Mus musculus (Mouse), this protein is Volume-regulated anion channel subunit LRRC8C.